Reading from the N-terminus, the 147-residue chain is MALRACGLIIFRRRLIPKVDNTAIEFLLLQASNGIHHWTPPKGHVEPGESDLQTALRETQEEAGIDAGQLTIIEGFRKELNYVAWEKPKTVIYWLAEVKDYDVEVRLSREHQAYRWLGLDEACQLAQFKDMKAVLQEGHQFLCSMAA.

Residue A2 is modified to N-acetylalanine. One can recognise a Nudix hydrolase domain in the interval 2 to 139 (ALRACGLIIF…DMKAVLQEGH (138 aa)). A Nudix box motif is present at residues 43–64 (GHVEPGESDLQTALRETQEEAG).

The protein belongs to the Nudix hydrolase family. Requires a divalent metal cation as cofactor.

It catalyses the reaction P(1),P(4)-bis(5'-guanosyl) tetraphosphate + H2O = GMP + GTP + 2 H(+). It carries out the reaction a 5'-end CoA-ribonucleoside in mRNA + H2O = a 5'-end phospho-adenosine-phospho-ribonucleoside in mRNA + (R)-4'-phosphopantetheine + 2 H(+). The catalysed reaction is a 5'-end FAD-phospho-ribonucleoside in mRNA + H2O = a 5'-end phospho-adenosine-phospho-ribonucleoside in mRNA + FMN + 2 H(+). Its activity is regulated as follows. Inhibited by fluoride ions. Functionally, catalyzes the asymmetric hydrolysis of diadenosine 5',5'''-P1,P4-tetraphosphate (Ap4A) to yield AMP and ATP. Exhibits decapping activity towards FAD-capped RNAs and dpCoA-capped RNAs in vitro. This Sus scrofa (Pig) protein is Bis(5'-nucleosyl)-tetraphosphatase [asymmetrical] (NUDT2).